The sequence spans 339 residues: FR-33289 synthase (339 aa).

3 residues coordinate Fe(2+): His150, Asp152, and His288.

This sequence belongs to the TfdA dioxygenase family. Homodimer. Fe(2+) serves as cofactor.

The catalysed reaction is 3-(N-acetyl-N-hydroxy)aminopropylphosphonate + 2-oxoglutarate + O2 = (R)-(3-(acetylhydroxyamino)-2-hydroxypropyl)phosphonate + succinate + CO2. It participates in antibiotic biosynthesis. Functionally, monooxygenase involved in the biosynthesis of the phosphonate antibiotic FR-33289, an antimalarial agent. Catalyzes the oxidative decarboxylation of the antibiotic FR-900098 (3-(N-acetyl-N-hydroxy)aminopropylphosphonate) to form FR-33289 ((R)-(3-(acetylhydroxyamino)-2-hydroxypropyl)phosphonate). The polypeptide is FR-33289 synthase (Streptomyces rubellomurinus (strain ATCC 31215)).